The chain runs to 664 residues: Protein-arginine deiminase type-3 (664 aa).

This sequence belongs to the protein arginine deiminase family. Ca(2+) serves as cofactor. Hair follicles, and epidermis at very low levels.

Its subcellular location is the cytoplasm. The enzyme catalyses L-arginyl-[protein] + H2O = L-citrullyl-[protein] + NH4(+). Its function is as follows. Catalyzes the deimination of arginine residues of proteins. The chain is Protein-arginine deiminase type-3 (PADI3) from Homo sapiens (Human).